Reading from the N-terminus, the 558-residue chain is 2-isopropylmalate synthase (558 aa).

The region spanning Pro-30–Pro-303 is the Pyruvate carboxyltransferase domain. Residues Asp-39, His-242, His-244, and Asn-278 each contribute to the Mg(2+) site. The interval Leu-438–Ile-558 is regulatory domain.

This sequence belongs to the alpha-IPM synthase/homocitrate synthase family. LeuA type 2 subfamily. Homodimer. Mg(2+) is required as a cofactor.

Its subcellular location is the cytoplasm. The catalysed reaction is 3-methyl-2-oxobutanoate + acetyl-CoA + H2O = (2S)-2-isopropylmalate + CoA + H(+). It participates in amino-acid biosynthesis; L-leucine biosynthesis; L-leucine from 3-methyl-2-oxobutanoate: step 1/4. Its function is as follows. Catalyzes the condensation of the acetyl group of acetyl-CoA with 3-methyl-2-oxobutanoate (2-ketoisovalerate) to form 3-carboxy-3-hydroxy-4-methylpentanoate (2-isopropylmalate). The protein is 2-isopropylmalate synthase of Helicobacter hepaticus (strain ATCC 51449 / 3B1).